Here is a 700-residue protein sequence, read N- to C-terminus: Acyl-coenzyme A oxidase 3 (700 aa).

This sequence belongs to the acyl-CoA oxidase family. Heteropentamer composed of five different subunits. Requires FAD as cofactor.

Its subcellular location is the peroxisome. The enzyme catalyses a 2,3-saturated acyl-CoA + O2 = a (2E)-enoyl-CoA + H2O2. It participates in lipid metabolism; peroxisomal fatty acid beta-oxidation. Oxidizes aliphatic acyl-CoA substrates of different chain lengths such as hexanoyl-CoA, decanoyl-CoA and myristoyl-CoA as well as aromatic/heterocyclic ring-substituted chromogenic substrates, such as furylpropionyl-CoA. Of the above substrates, the efficiency of the enzyme, exhibits the following order: decanoyl-CoA &gt; myristoyl-CoA &gt; hexanoyl-CoA &gt; furyl-propionyl-CoA. The sequence is that of Acyl-coenzyme A oxidase 3 (POX3) from Yarrowia lipolytica (strain CLIB 122 / E 150) (Yeast).